Consider the following 37-residue polypeptide: Cytochrome b6-f complex subunit 5 (37 aa).

The helical transmembrane segment at 5–25 threads the bilayer; it reads LLSGIVLGLISITSAGLFVTA.

Belongs to the PetG family. As to quaternary structure, the 4 large subunits of the cytochrome b6-f complex are cytochrome b6, subunit IV (17 kDa polypeptide, PetD), cytochrome f and the Rieske protein, while the 4 small subunits are PetG, PetL, PetM and PetN. The complex functions as a dimer.

The protein localises to the plastid. It is found in the chloroplast thylakoid membrane. In terms of biological role, component of the cytochrome b6-f complex, which mediates electron transfer between photosystem II (PSII) and photosystem I (PSI), cyclic electron flow around PSI, and state transitions. PetG is required for either the stability or assembly of the cytochrome b6-f complex. This is Cytochrome b6-f complex subunit 5 from Psilotum nudum (Whisk fern).